Here is a 300-residue protein sequence, read N- to C-terminus: Mycothiol acetyltransferase (300 aa).

N-acetyltransferase domains lie at 4–140 (IDWR…RPLT) and 151–300 (VRLA…AVAD). Position 36 (Asp36) interacts with 1D-myo-inositol 2-(L-cysteinylamino)-2-deoxy-alpha-D-glucopyranoside. 79–81 (LVV) serves as a coordination point for acetyl-CoA. 3 residues coordinate 1D-myo-inositol 2-(L-cysteinylamino)-2-deoxy-alpha-D-glucopyranoside: Glu178, Lys219, and Glu227. An acetyl-CoA-binding site is contributed by 231–233 (VGV). Tyr269 provides a ligand contact to 1D-myo-inositol 2-(L-cysteinylamino)-2-deoxy-alpha-D-glucopyranoside. 274–279 (NGAAVK) contacts acetyl-CoA.

Belongs to the acetyltransferase family. MshD subfamily. As to quaternary structure, monomer.

It carries out the reaction 1D-myo-inositol 2-(L-cysteinylamino)-2-deoxy-alpha-D-glucopyranoside + acetyl-CoA = mycothiol + CoA + H(+). Its function is as follows. Catalyzes the transfer of acetyl from acetyl-CoA to desacetylmycothiol (Cys-GlcN-Ins) to form mycothiol. The chain is Mycothiol acetyltransferase from Mycobacterium sp. (strain JLS).